The sequence spans 476 residues: Splicing factor ESS-2 homolog (476 aa).

Met1 bears the N-acetylmethionine mark. Residues 1–18 show a composition bias toward low complexity; it reads METPGASASSLLLPAASR. Disordered stretches follow at residues 1–36 and 91–148; these read METP…SKQR and LGKM…LPSL. The residue at position 3 (Thr3) is a Phosphothreonine. The segment covering 133–142 has biased composition (acidic residues); that stretch reads DGEAGEEEEK. Lys142 participates in a covalent cross-link: Glycyl lysine isopeptide (Lys-Gly) (interchain with G-Cter in SUMO2). Position 292 is a phosphoserine (Ser292). Thr386 is modified (phosphothreonine). Ser391 and Ser395 each carry phosphoserine. Residues 413 to 465 form a disordered region; that stretch reads ALRASYTPSPARSTHLKTPASGLQTPTSTPAPGSATRTPLTQDPASITDNLLQ. Over residues 437-451 the composition is skewed to low complexity; the sequence is TPTSTPAPGSATRTP. Residues 452 to 463 show a composition bias toward polar residues; that stretch reads LTQDPASITDNL.

Belongs to the ESS2 family. In terms of assembly, identified in the spliceosome C complex. Interacts with FRA10AC1. Highly expressed in heart, brain and skeletal muscle. Detected at low levels in placenta.

It localises to the nucleus. Functionally, may be involved in pre-mRNA splicing. The protein is Splicing factor ESS-2 homolog of Homo sapiens (Human).